Reading from the N-terminus, the 263-residue chain is Protein PYRICULARIA ORYZAE RESISTANCE 21 (263 aa).

The region spanning 1 to 68 (MGILVISVDL…IWCKAGKIIK (68 aa)) is the HMA domain. Residues cysteine 12 and cysteine 15 each coordinate a metal cation. The disordered stretch occupies residues 126–153 (CEKPKPCEKPPPCKPEEPPKPPPEKPPP). The segment covering 139–153 (KPEEPPKPPPEKPPP) has biased composition (basic and acidic residues).

Its function is as follows. Involved in defense responses. Contributes to slowing defense responses toward Magnaporthe oryzae. The sequence is that of Protein PYRICULARIA ORYZAE RESISTANCE 21 from Oryza sativa subsp. indica (Rice).